A 269-amino-acid polypeptide reads, in one-letter code: 2' cyclic ADP-D-ribose synthase AbTIR (269 aa).

A coiled-coil region spans residues 31–99; that stretch reads LKTKLSEISR…KQQKDEIEHQ (69 aa). In terms of domain architecture, TIR spans 133 to 266; the sequence is PEYDLFISHA…EIAHQLADVI (134 aa). NAD(+) is bound by residues S143, K172, and K202. The active site involves E208. K245 contacts NAD(+).

In terms of assembly, homodimer. In the presence of NAD(+) analog 8-amino-isoquinoline adenine dinucleotide (3AD) forms filaments with 3AD between monomers; conformational changes occur upon 3AD binding.

It catalyses the reaction NAD(+) = 2'cADPR + nicotinamide + H(+). The enzyme catalyses NAD(+) + H2O = ADP-D-ribose + nicotinamide + H(+). It carries out the reaction NADP(+) + H2O = ADP-D-ribose 2'-phosphate + nicotinamide + H(+). Functionally, NAD(+) hydrolase (NADase) that catalyzes cleavage of NAD(+) into ADP-D-ribose (ADPR) and nicotinamide. In addition to ADPR, also generates a cyclization variant of cyclic ADPR (cADPR), termed 2'cADPR (v-cADPR). Cleaves NADP(+), but does not cyclize the product. This Acinetobacter baumannii (strain 1295743) protein is 2' cyclic ADP-D-ribose synthase AbTIR.